The primary structure comprises 348 residues: Killer cell immunoglobulin-like receptor 2DL1 (348 aa).

A signal peptide spans M1 to P21. At H22–H245 the chain is on the extracellular side. Ig-like C2-type domains are found at residues E42 to S107 and G142 to S205. A disulfide bond links C49 and C100. N67, N84, N144, and N178 each carry an N-linked (GlcNAc...) asparagine glycan. C149 and C198 are joined by a disulfide. The tract at residues V220–G239 is disordered. Residues I246–L264 traverse the membrane as a helical segment. Over H265–P348 the chain is Cytoplasmic.

The protein belongs to the immunoglobulin superfamily. In terms of assembly, interacts with ARRB2. Interacts with PTPN6; the interaction is enhanced by ARRB2. Interacts with PTPN11; the interaction is enhanced by ARRB2. As to expression, expressed by NK cells.

The protein localises to the cell membrane. Receptor on natural killer (NK) cells for some HLA-C alleles such as w4 and w6. Inhibits the activity of NK cells thus preventing cell lysis. The polypeptide is Killer cell immunoglobulin-like receptor 2DL1 (Homo sapiens (Human)).